We begin with the raw amino-acid sequence, 131 residues long: MRRTFFKAKIHRATVTHADLEYEGSVSIDEDLLEAAGIWEYEAVHVWNITRGTRLQTYAIKGERGSGIICINGAAAHLNRPGDMVILATFAELEEAEARDFKPTVVLVDRQNKIVAKDAVEVPGPARRVTA.

Ser25 serves as the catalytic Schiff-base intermediate with substrate; via pyruvic acid. Residue Ser25 is modified to Pyruvic acid (Ser). Thr57 provides a ligand contact to substrate. Tyr58 (proton donor) is an active-site residue. Residue 73 to 75 (GAA) coordinates substrate.

It belongs to the PanD family. Heterooctamer of four alpha and four beta subunits. The cofactor is pyruvate. Post-translationally, is synthesized initially as an inactive proenzyme, which is activated by self-cleavage at a specific serine bond to produce a beta-subunit with a hydroxyl group at its C-terminus and an alpha-subunit with a pyruvoyl group at its N-terminus.

The protein resides in the cytoplasm. The catalysed reaction is L-aspartate + H(+) = beta-alanine + CO2. Its pathway is cofactor biosynthesis; (R)-pantothenate biosynthesis; beta-alanine from L-aspartate: step 1/1. Its function is as follows. Catalyzes the pyruvoyl-dependent decarboxylation of aspartate to produce beta-alanine. This is Aspartate 1-decarboxylase from Anaeromyxobacter dehalogenans (strain 2CP-C).